The following is a 106-amino-acid chain: N(4)-acetylcytidine amidohydrolase (106 aa).

Residues 9–105 (TFFEFLTPLI…ELYVIEYELI (97 aa)) enclose the ASCH domain. The active-site Proton acceptor is K23. T26 functions as the Nucleophile in the catalytic mechanism. Catalysis depends on E76, which acts as the Proton donor.

This sequence belongs to the N(4)-acetylcytidine amidohydrolase family.

The enzyme catalyses N(4)-acetylcytidine + H2O = cytidine + acetate + H(+). It carries out the reaction N(4)-acetyl-2'-deoxycytidine + H2O = 2'-deoxycytidine + acetate + H(+). It catalyses the reaction N(4)-acetylcytosine + H2O = cytosine + acetate + H(+). Catalyzes the hydrolysis of N(4)-acetylcytidine (ac4C). The sequence is that of N(4)-acetylcytidine amidohydrolase from Vibrio campbellii (strain ATCC BAA-1116).